The following is a 151-amino-acid chain: UPF0178 protein Pfl01_5469 (151 aa).

Belongs to the UPF0178 family.

The polypeptide is UPF0178 protein Pfl01_5469 (Pseudomonas fluorescens (strain Pf0-1)).